Consider the following 503-residue polypeptide: 2-(3-amino-3-carboxypropyl)histidine synthase subunit 2 (503 aa).

[4Fe-4S] cluster contacts are provided by cysteine 93, cysteine 114, and cysteine 334. A disordered region spans residues glycine 464–lysine 503. The span at glycine 492–lysine 503 shows a compositional bias: basic and acidic residues.

It belongs to the DPH1/DPH2 family. DPH2 subfamily. Component of the 2-(3-amino-3-carboxypropyl)histidine synthase complex composed of dph1, dph2, dph3 and a NADH-dependent reductase, predominantly cbr1. It depends on [4Fe-4S] cluster as a cofactor.

It localises to the cytoplasm. It functions in the pathway protein modification; peptidyl-diphthamide biosynthesis. In terms of biological role, required for the first step of diphthamide biosynthesis, a post-translational modification of histidine which occurs in elongation factor 2. Dph1 and dph2 transfer a 3-amino-3-carboxypropyl (ACP) group from S-adenosyl-L-methionine (SAM) to a histidine residue, the reaction is assisted by a reduction system comprising dph3 and a NADH-dependent reductase, predominantly cbr1. Facilitates the reduction of the catalytic iron-sulfur cluster found in the dph1 subunit. This Schizosaccharomyces pombe (strain 972 / ATCC 24843) (Fission yeast) protein is 2-(3-amino-3-carboxypropyl)histidine synthase subunit 2.